The following is a 103-amino-acid chain: Protamine-2 (103 aa).

The disordered stretch occupies residues 1–103; the sequence is MVRYRTRSLS…RTRRRRCRRY (103 aa). Phosphoserine is present on residues Ser-8 and Ser-10. The segment covering 8–17 has biased composition (basic and acidic residues); it reads SLSERPHEVH. The span at 18 to 29 shows a compositional bias: low complexity; that stretch reads GQQVHGQDQGHN. Ser-37 carries the post-translational modification Phosphoserine. The segment covering 39–48 has biased composition (basic and acidic residues); it reads EHVEVYERTH. A compositionally biased stretch (basic residues) spans 49 to 103; sequence QGHSHHRRRRCSQRRLHRIHRRRHRSCRRRRRRSCRHRRRHRRGCRTRRRRCRRY.

The protein belongs to the protamine P2 family. As to quaternary structure, interacts with TDRP. In terms of processing, proteolytic processing into mature chains is required for histone eviction during spermatogenesis. Transition proteins (TNP1 and TNP2) are required for processing. In terms of tissue distribution, testis.

The protein localises to the nucleus. The protein resides in the chromosome. Functionally, protamines substitute for histones in the chromatin of sperm during the haploid phase of spermatogenesis. They compact sperm DNA into a highly condensed, stable and inactive complex. The polypeptide is Protamine-2 (PRM2) (Erythrocebus patas (Red guenon)).